A 206-amino-acid chain; its full sequence is Proteasome subunit beta 2 (206 aa).

Residues 1-10 (MLHLKEKLKG) constitute a propeptide, removed in mature form; by autocatalysis. The active-site Nucleophile is the threonine 11.

Belongs to the peptidase T1B family. In terms of assembly, the 20S proteasome core is composed of 14 alpha and 14 beta subunits that assemble into four stacked heptameric rings, resulting in a barrel-shaped structure. The two inner rings, each composed of seven catalytic beta subunits, are sandwiched by two outer rings, each composed of seven alpha subunits. The catalytic chamber with the active sites is on the inside of the barrel. Has a gated structure, the ends of the cylinder being occluded by the N-termini of the alpha-subunits. Is capped at one or both ends by the proteasome regulatory ATPase, PAN.

The protein resides in the cytoplasm. The catalysed reaction is Cleavage of peptide bonds with very broad specificity.. Its activity is regulated as follows. The formation of the proteasomal ATPase PAN-20S proteasome complex, via the docking of the C-termini of PAN into the intersubunit pockets in the alpha-rings, triggers opening of the gate for substrate entry. Interconversion between the open-gate and close-gate conformations leads to a dynamic regulation of the 20S proteasome proteolysis activity. Component of the proteasome core, a large protease complex with broad specificity involved in protein degradation. The chain is Proteasome subunit beta 2 from Pyrococcus furiosus (strain ATCC 43587 / DSM 3638 / JCM 8422 / Vc1).